A 95-amino-acid chain; its full sequence is Small ribosomal subunit protein uS14 (95 aa).

It belongs to the universal ribosomal protein uS14 family. In terms of assembly, part of the 30S ribosomal subunit. Contacts proteins S3 and S10.

Its function is as follows. Binds 16S rRNA, required for the assembly of 30S particles and may also be responsible for determining the conformation of the 16S rRNA at the A site. The polypeptide is Small ribosomal subunit protein uS14 (rpsN) (Carsonella ruddii).